The following is a 449-amino-acid chain: UDP-N-acetylmuramoylalanine--D-glutamate ligase (449 aa).

An ATP-binding site is contributed by 119–125; that stretch reads GSNGKTT.

The protein belongs to the MurCDEF family.

The protein localises to the cytoplasm. It carries out the reaction UDP-N-acetyl-alpha-D-muramoyl-L-alanine + D-glutamate + ATP = UDP-N-acetyl-alpha-D-muramoyl-L-alanyl-D-glutamate + ADP + phosphate + H(+). Its pathway is cell wall biogenesis; peptidoglycan biosynthesis. Cell wall formation. Catalyzes the addition of glutamate to the nucleotide precursor UDP-N-acetylmuramoyl-L-alanine (UMA). In Streptococcus suis (strain 98HAH33), this protein is UDP-N-acetylmuramoylalanine--D-glutamate ligase.